We begin with the raw amino-acid sequence, 533 residues long: Lymphocyte cytosolic protein 2 (533 aa).

Residues 12–78 enclose the SAM domain; sequence VLAWNSDNLA…SQDINKNEER (67 aa). Phosphotyrosine is present on Tyr-23. Disordered regions lie at residues 78-359 and 374-419; these read RRSI…PLAH and SASL…TPLD. Residues 94–144 are compositionally biased toward acidic residues; sequence ETESHEEDDGGWSSFEDDYESPNDDDPDGEDDGDYESPNEEEQALVDDAAD. Positions 151–172 are enriched in polar residues; it reads NNEEALQSSILPPNSFHNTNSM. Pro residues predominate over residues 186-201; sequence PPVPPLRPKPALPPLP. Phosphoserine is present on residues Ser-207 and Ser-210. Over residues 340-354 the composition is skewed to polar residues; that stretch reads NTFPSRSVQPSSKNT. Ser-376 and Ser-410 each carry phosphoserine. The span at 400–411 shows a compositional bias: pro residues; it reads LPVPNRPQPPSP. The SH2 domain maps to 422–530; sequence WYVSYITRPE…RYQCTLTHAA (109 aa).

As to quaternary structure, interacts with SLA. Interacts with CBLB. Interacts with GRB2. Interacts with SHB. Interacts with PRAM1. Interacts (via SH2 domain) with CD6 (via tyrosine phosphorylated C-terminus). Interacts with FYB1 and the phosphorylated form of FYB2. Interacts with 14-3-3 adapter/YWHAZ; this phosphorylation leads to YWHAZ proteolytic degradation. Interacts with VAV1; this interaction plays a role in TCR-mediated cytokine production. Interacts with AGER; this interaction plays an important role in AGER-mediated pro-inflammatory responses and cytokine release. Post-translationally, phosphorylated after T-cell receptor activation by ZAP70, ITK and TXK, which leads to the up-regulation of Th1 preferred cytokine IL-2. SYK-dependent phosphorylation is required for recruitment of PI3K signaling components. Highly expressed in spleen, thymus, and peripheral blood leukocytes.

The protein resides in the cytoplasm. Adapter protein primarily involved in signaling pathways within T-cells, as well as other immune cells such as platelets, mast cells, and natural killer (NK) cells. Plays a crucial role for transducing signal from the T-cell receptor (TCR) after antigen recognition leading to T-cell activation. Mechanistically, once phosphorylated by the kinase ZAP70, mediates interactions with the guanine-nucleotide exchange factor VAV1, the adapter protein NCK and the kinase ITK. In turn, stimulates the activation of PKC-theta/PRKCQ and NF-kappa-B transcriptional activity in response to CD3 and CD28 costimulation. Also plays an essential role in AGER-induced signaling pathways including p38 MAPK and ERK1/2 activation leading to cytokine release and pro-inflammatory responses. This chain is Lymphocyte cytosolic protein 2 (Lcp2), found in Mus musculus (Mouse).